A 440-amino-acid polypeptide reads, in one-letter code: Probable exopolygalacturonase C (440 aa).

The first 21 residues, 1–21 (MLITNPALLGILASLVPLALG), serve as a signal peptide directing secretion. Residues N84 and N151 are each glycosylated (N-linked (GlcNAc...) asparagine). PbH1 repeat units follow at residues 188–210 (GDDITVSHAIVDATSTGGFPFNT), 217–238 (GTNISITDSVMFNGDDAIAVNT), and 240–261 (SHNIVFARNTIGYQSHGMSIGS). Residue N219 is glycosylated (N-linked (GlcNAc...) asparagine). D231 functions as the Proton donor in the catalytic mechanism. The active site involves H255. The N-linked (GlcNAc...) asparagine glycan is linked to N271. Residues 272–293 (ITNLRFEDVTVIDALYAARFKS) form a PbH1 4 repeat. N313 carries an N-linked (GlcNAc...) asparagine glycan. C389 and C395 are disulfide-bonded. A glycan (N-linked (GlcNAc...) asparagine) is linked at N434.

It belongs to the glycosyl hydrolase 28 family.

The protein resides in the secreted. It carries out the reaction [(1-&gt;4)-alpha-D-galacturonosyl](n) + H2O = alpha-D-galacturonate + [(1-&gt;4)-alpha-D-galacturonosyl](n-1). Specific in hydrolyzing the terminal glycosidic bond of polygalacturonic acid and oligogalacturonates. The protein is Probable exopolygalacturonase C (pgxC) of Aspergillus fumigatus (strain CBS 144.89 / FGSC A1163 / CEA10) (Neosartorya fumigata).